Reading from the N-terminus, the 159-residue chain is Large ribosomal subunit protein uL15 (159 aa).

The segment covering 1–13 has biased composition (basic and acidic residues); sequence MRLNELRDNDGAT. A disordered region spans residues 1–41; the sequence is MRLNELRDNDGATKIRTRVGRGIGSGKGKTGGRGVKGQKSR. Positions 21–35 are enriched in gly residues; sequence RGIGSGKGKTGGRGV.

The protein belongs to the universal ribosomal protein uL15 family. Part of the 50S ribosomal subunit.

Binds to the 23S rRNA. The chain is Large ribosomal subunit protein uL15 from Maricaulis maris (strain MCS10) (Caulobacter maris).